The sequence spans 446 residues: MDLELQDFYNKTLATENNTAATRNSDFPVWDDYKSSVDDLQYFLIGLYTFVSLLGFMGNLLILMALMRKRNQKTMVNFLIGNLAFSDILVVLFCSPFTLTSVLLDQWMFGKVMCHIMPFLQCVSVLVSTLILISIAIVRYHMIKHPISNNLTANHGYFLIATVWTLGFAICSPLPVFHSLVELQETFDSALLSSRYLCVESWPSDSYRIAFTISLLLVQYILPLVCLTVSHTSVCRSISCGLSNKENKLEENEMINLTLQPFKKSGPQVKLSSSHKWSYSFIRKHRRRYSKKTACVLPAPARPPQENHSRMLPENFGSVRSQHSSSSKFIPGVPTCFEVKPEENSDVHDMRVNRSIMRIKKRSRSVFYRLTILILVFAVSWMPLHLFHVVTDFNDNLISNRHFKLVYCICHLLGMMSCCLNPILYGFLNNGIKADLISLIQCLHMS.

Topologically, residues 1 to 42 (MDLELQDFYNKTLATENNTAATRNSDFPVWDDYKSSVDDLQY) are extracellular. N-linked (GlcNAc...) asparagine glycosylation is found at Asn-10 and Asn-17. A helical transmembrane segment spans residues 43–63 (FLIGLYTFVSLLGFMGNLLIL). Residues 64 to 77 (MALMRKRNQKTMVN) lie on the Cytoplasmic side of the membrane. Residues 78–98 (FLIGNLAFSDILVVLFCSPFT) traverse the membrane as a helical segment. The Extracellular segment spans residues 99 to 117 (LTSVLLDQWMFGKVMCHIM). Cys-114 and Cys-198 are joined by a disulfide. Residues 118-138 (PFLQCVSVLVSTLILISIAIV) form a helical membrane-spanning segment. Residues 139 to 156 (RYHMIKHPISNNLTANHG) are Cytoplasmic-facing. Residues 157–177 (YFLIATVWTLGFAICSPLPVF) traverse the membrane as a helical segment. The Extracellular segment spans residues 178–208 (HSLVELQETFDSALLSSRYLCVESWPSDSYR). Residues 209 to 229 (IAFTISLLLVQYILPLVCLTV) traverse the membrane as a helical segment. The Cytoplasmic portion of the chain corresponds to 230–369 (SHTSVCRSIS…KKRSRSVFYR (140 aa)). Residues 370–390 (LTILILVFAVSWMPLHLFHVV) form a helical membrane-spanning segment. Residues 391–407 (TDFNDNLISNRHFKLVY) lie on the Extracellular side of the membrane. The chain crosses the membrane as a helical span at residues 408 to 428 (CICHLLGMMSCCLNPILYGFL). At 429–446 (NNGIKADLISLIQCLHMS) the chain is on the cytoplasmic side. Residue Cys-442 is the site of S-palmitoyl cysteine attachment.

This sequence belongs to the G-protein coupled receptor 1 family.

Its subcellular location is the cell membrane. In terms of biological role, receptor for neuropeptide Y and peptide YY. The activity of this receptor is mediated by G proteins that inhibit adenylate cyclase activity. Seems to be associated with food intake. Could be involved in feeding disorders. The polypeptide is Neuropeptide Y receptor type 5 (NPY5R) (Canis lupus familiaris (Dog)).